The chain runs to 141 residues: Large ribosomal subunit protein uL11 (141 aa).

It belongs to the universal ribosomal protein uL11 family. In terms of assembly, part of the ribosomal stalk of the 50S ribosomal subunit. Interacts with L10 and the large rRNA to form the base of the stalk. L10 forms an elongated spine to which L12 dimers bind in a sequential fashion forming a multimeric L10(L12)X complex. One or more lysine residues are methylated.

Forms part of the ribosomal stalk which helps the ribosome interact with GTP-bound translation factors. The sequence is that of Large ribosomal subunit protein uL11 from Coprothermobacter proteolyticus (strain ATCC 35245 / DSM 5265 / OCM 4 / BT).